We begin with the raw amino-acid sequence, 445 residues long: 3-phosphoshikimate 1-carboxyvinyltransferase (445 aa).

Residues 1 to 25 (MTDSNQPMPLQARKSGALHGTARVP) form a disordered region. 3-phosphoshikimate contacts are provided by K28, S29, and R33. K28 is a phosphoenolpyruvate binding site. G101 and R129 together coordinate phosphoenolpyruvate. Residues S175, Q177, D328, and K355 each contribute to the 3-phosphoshikimate site. Q177 contributes to the phosphoenolpyruvate binding site. The active-site Proton acceptor is D328. Positions 359 and 402 each coordinate phosphoenolpyruvate.

The protein belongs to the EPSP synthase family. In terms of assembly, monomer.

It is found in the cytoplasm. The enzyme catalyses 3-phosphoshikimate + phosphoenolpyruvate = 5-O-(1-carboxyvinyl)-3-phosphoshikimate + phosphate. It participates in metabolic intermediate biosynthesis; chorismate biosynthesis; chorismate from D-erythrose 4-phosphate and phosphoenolpyruvate: step 6/7. Functionally, catalyzes the transfer of the enolpyruvyl moiety of phosphoenolpyruvate (PEP) to the 5-hydroxyl of shikimate-3-phosphate (S3P) to produce enolpyruvyl shikimate-3-phosphate and inorganic phosphate. In Rhodopseudomonas palustris (strain ATCC BAA-98 / CGA009), this protein is 3-phosphoshikimate 1-carboxyvinyltransferase.